The primary structure comprises 296 residues: Light-independent protochlorophyllide reductase iron-sulfur ATP-binding protein (296 aa).

Residues 1-11 show a composition bias toward basic and acidic residues; it reads MTSTITRKEDG. The disordered stretch occupies residues 1–20; that stretch reads MTSTITRKEDGEGSVQVKQD. ATP contacts are provided by residues 39–44 and Lys-68; that span reads GIGKST. Ser-43 is a binding site for Mg(2+). [4Fe-4S] cluster contacts are provided by Cys-124 and Cys-158. An ATP-binding site is contributed by 209-210; sequence NR.

The protein belongs to the NifH/BchL/ChlL family. As to quaternary structure, homodimer. Protochlorophyllide reductase is composed of three subunits; ChlL, ChlN and ChlB. [4Fe-4S] cluster serves as cofactor.

The catalysed reaction is chlorophyllide a + oxidized 2[4Fe-4S]-[ferredoxin] + 2 ADP + 2 phosphate = protochlorophyllide a + reduced 2[4Fe-4S]-[ferredoxin] + 2 ATP + 2 H2O. It participates in porphyrin-containing compound metabolism; chlorophyll biosynthesis (light-independent). Functionally, component of the dark-operative protochlorophyllide reductase (DPOR) that uses Mg-ATP and reduced ferredoxin to reduce ring D of protochlorophyllide (Pchlide) to form chlorophyllide a (Chlide). This reaction is light-independent. The L component serves as a unique electron donor to the NB-component of the complex, and binds Mg-ATP. The chain is Light-independent protochlorophyllide reductase iron-sulfur ATP-binding protein from Prochlorococcus marinus (strain NATL1A).